The chain runs to 461 residues: Porin AaxA (461 aa).

Residues 1 to 22 form the signal peptide; that stretch reads MSFRSVLLTALLSLSFTTTMQA.

Belongs to the OprB family.

It is found in the cell outer membrane. Facilitates L-arginine uptake, as part of the AaxABC system. The arginine uptake by the bacterium in the macrophage may be a virulence factor against the host innate immune response. This chain is Porin AaxA (aaxA), found in Chlamydia trachomatis serovar L2 (strain ATCC VR-902B / DSM 19102 / 434/Bu).